Here is a 480-residue protein sequence, read N- to C-terminus: uncharacterized protein (480 aa).

The disordered stretch occupies residues methionine 1–histidine 20.

This is an uncharacterized protein from Arabidopsis thaliana (Mouse-ear cress).